Reading from the N-terminus, the 296-residue chain is Putative ankyrin repeat protein FPV216 (296 aa).

ANK repeat units lie at residues 73–102 (SYVNPLIYAIECDNHDAILSLIRYGADVNT) and 107–136 (LVITPLYISVLHGCPKCVEILLYYGANINI).

This chain is Putative ankyrin repeat protein FPV216, found in Fowlpox virus (strain NVSL) (FPV).